The sequence spans 113 residues: Protein AaeX (113 aa).

The next 2 membrane-spanning stretches (helical) occupy residues 3–23 (LLPV…EMIL) and 43–63 (FVWH…YLIS).

Belongs to the AaeX family.

The protein localises to the cell membrane. This Sodalis glossinidius (strain morsitans) protein is Protein AaeX.